Consider the following 443-residue polypeptide: Trigger factor (443 aa).

Positions 163-248 constitute a PPIase FKBP-type domain; the sequence is GDTAVIDFEG…INEIKAKELP (86 aa).

It belongs to the FKBP-type PPIase family. Tig subfamily.

The protein resides in the cytoplasm. It carries out the reaction [protein]-peptidylproline (omega=180) = [protein]-peptidylproline (omega=0). Functionally, involved in protein export. Acts as a chaperone by maintaining the newly synthesized protein in an open conformation. Functions as a peptidyl-prolyl cis-trans isomerase. This is Trigger factor from Agathobacter rectalis (strain ATCC 33656 / DSM 3377 / JCM 17463 / KCTC 5835 / VPI 0990) (Eubacterium rectale).